A 160-amino-acid polypeptide reads, in one-letter code: Transcription elongation factor GreA (160 aa).

Residues 50–70 (AAREQQSFNEGRIQELEAKLS) are a coiled coil.

Belongs to the GreA/GreB family.

Functionally, necessary for efficient RNA polymerase transcription elongation past template-encoded arresting sites. The arresting sites in DNA have the property of trapping a certain fraction of elongating RNA polymerases that pass through, resulting in locked ternary complexes. Cleavage of the nascent transcript by cleavage factors such as GreA or GreB allows the resumption of elongation from the new 3'terminus. GreA releases sequences of 2 to 3 nucleotides. This Legionella pneumophila (strain Corby) protein is Transcription elongation factor GreA.